A 100-amino-acid polypeptide reads, in one-letter code: Aspartyl/glutamyl-tRNA(Asn/Gln) amidotransferase subunit C (100 aa).

The protein belongs to the GatC family. As to quaternary structure, heterotrimer of A, B and C subunits.

It catalyses the reaction L-glutamyl-tRNA(Gln) + L-glutamine + ATP + H2O = L-glutaminyl-tRNA(Gln) + L-glutamate + ADP + phosphate + H(+). The enzyme catalyses L-aspartyl-tRNA(Asn) + L-glutamine + ATP + H2O = L-asparaginyl-tRNA(Asn) + L-glutamate + ADP + phosphate + 2 H(+). Allows the formation of correctly charged Asn-tRNA(Asn) or Gln-tRNA(Gln) through the transamidation of misacylated Asp-tRNA(Asn) or Glu-tRNA(Gln) in organisms which lack either or both of asparaginyl-tRNA or glutaminyl-tRNA synthetases. The reaction takes place in the presence of glutamine and ATP through an activated phospho-Asp-tRNA(Asn) or phospho-Glu-tRNA(Gln). This Streptococcus suis (strain 98HAH33) protein is Aspartyl/glutamyl-tRNA(Asn/Gln) amidotransferase subunit C.